We begin with the raw amino-acid sequence, 284 residues long: Bifunctional protein FolD 1 (284 aa).

Residues 164–166 (GRS), Ser-189, and Ile-230 contribute to the NADP(+) site.

Belongs to the tetrahydrofolate dehydrogenase/cyclohydrolase family. Homodimer.

It catalyses the reaction (6R)-5,10-methylene-5,6,7,8-tetrahydrofolate + NADP(+) = (6R)-5,10-methenyltetrahydrofolate + NADPH. The enzyme catalyses (6R)-5,10-methenyltetrahydrofolate + H2O = (6R)-10-formyltetrahydrofolate + H(+). It functions in the pathway one-carbon metabolism; tetrahydrofolate interconversion. Its function is as follows. Catalyzes the oxidation of 5,10-methylenetetrahydrofolate to 5,10-methenyltetrahydrofolate and then the hydrolysis of 5,10-methenyltetrahydrofolate to 10-formyltetrahydrofolate. The sequence is that of Bifunctional protein FolD 1 from Rubrobacter xylanophilus (strain DSM 9941 / JCM 11954 / NBRC 16129 / PRD-1).